Consider the following 158-residue polypeptide: Endoribonuclease YbeY (158 aa).

3 residues coordinate Zn(2+): His-117, His-121, and His-127.

The protein belongs to the endoribonuclease YbeY family. It depends on Zn(2+) as a cofactor.

It localises to the cytoplasm. Functionally, single strand-specific metallo-endoribonuclease involved in late-stage 70S ribosome quality control and in maturation of the 3' terminus of the 16S rRNA. In Psychromonas ingrahamii (strain DSM 17664 / CCUG 51855 / 37), this protein is Endoribonuclease YbeY.